The chain runs to 652 residues: Bifunctional protein ThiO/ThiG (652 aa).

A thiO region spans residues 1–366 (MTRDIVIIGG…HYSRSQKQAS (366 aa)). Residues 5–19 (IVII…AIAV) and 44–46 (AGM) contribute to the FAD site. Glutamate 52 is a glycine binding site. Valine 173 serves as a coordination point for FAD. The glycine site is built by arginine 301 and arginine 327. 325–331 (HYRNGIL) contacts FAD. The thiG stretch occupies residues 393–652 (PLIIAGKSFH…ASSPVTGTIS (260 aa)). Lysine 494 functions as the Schiff-base intermediate with DXP in the catalytic mechanism. 1-deoxy-D-xylulose 5-phosphate is bound by residues glycine 555, 581–582 (AG), and 603–604 (NS).

This sequence in the N-terminal section; belongs to the DAO family. ThiO subfamily. The protein in the C-terminal section; belongs to the ThiG family. Interacts with ThiH and ThiS. FAD is required as a cofactor.

The protein resides in the cytoplasm. It carries out the reaction glycine + O2 + H2O = glyoxylate + H2O2 + NH4(+). The catalysed reaction is [ThiS sulfur-carrier protein]-C-terminal-Gly-aminoethanethioate + 2-iminoacetate + 1-deoxy-D-xylulose 5-phosphate = [ThiS sulfur-carrier protein]-C-terminal Gly-Gly + 2-[(2R,5Z)-2-carboxy-4-methylthiazol-5(2H)-ylidene]ethyl phosphate + 2 H2O + H(+). Its pathway is cofactor biosynthesis; thiamine diphosphate biosynthesis. Its function is as follows. Catalyzes the FAD-dependent oxidative deamination of glycine. Is essential for thiamine biosynthesis since the oxidation of glycine catalyzed by ThiO generates the glycine imine intermediate (dehydroglycine) required for the biosynthesis of the thiazole ring of thiamine pyrophosphate. In terms of biological role, catalyzes the rearrangement of 1-deoxy-D-xylulose 5-phosphate (DXP) to produce the thiazole phosphate moiety of thiamine. Sulfur is provided by the thiocarboxylate moiety of the carrier protein ThiS. In vitro, sulfur can be provided by H(2)S. In Nostoc sp. (strain PCC 7120 / SAG 25.82 / UTEX 2576), this protein is Bifunctional protein ThiO/ThiG (thiO/thiG).